A 391-amino-acid chain; its full sequence is Metallophosphoesterase 1 (391 aa).

Residues 25 to 45 form a helical membrane-spanning segment; that stretch reads TVVIISVLLFCEYFIYHLVIF. A divalent metal cation is bound by residues Asp72, Asp114, Asn152, His244, His298, and His300. The helical transmembrane segment at 352-372 threads the bilayer; sequence VLATYGAAAVFLVVLILAHLE.

Belongs to the metallophosphoesterase superfamily. MPPE1 family. Interacts with GPI-anchor proteins (via the GPI portion). Interacts with TMED10. The cofactor is Mn(2+).

The protein resides in the endoplasmic reticulum-Golgi intermediate compartment membrane. Its function is as follows. Metallophosphoesterase that catalyzes the removal of a side-chain ethanolamine-phosphate (EtNP) from the second mannose of the GPI-anchor protein intermediate. Participates in the glycan remodeling steps of GPI-anchor maturation to allow an efficient transport of GPI-anchor proteins from the endoplasmic reticulum to the Golgi. This is Metallophosphoesterase 1 from Cricetulus griseus (Chinese hamster).